The primary structure comprises 416 residues: Creatine kinase U-type, mitochondrial (416 aa).

The transit peptide at 1-39 (MAGPFSRLLSARPGLRLLALAGAGSLAAGFLLRPEPIRA) directs the protein to the mitochondrion. The cardiolipin-binding stretch occupies residues 40 to 63 (ASERRRQYPPSAEYPDLRKHNNCM). The 88-residue stretch at 44 to 131 (RRQYPPSAEY…FDPVIQERHN (88 aa)) folds into the Phosphagen kinase N-terminal domain. Serine 151 is subject to Phosphoserine. One can recognise a Phosphagen kinase C-terminal domain in the interval 158 to 400 (YVLSSRVRTG…NYLIDCERRL (243 aa)). 161–165 (SSRVR) contacts ATP. The residue at position 196 (serine 196) is a Phosphoserine. At threonine 213 the chain carries Phosphothreonine. Histidine 224 contacts ATP. At serine 232 the chain carries Phosphoserine. Residues arginine 269, arginine 325, and 353–358 (RGTGGV) each bind ATP. A Phosphothreonine modification is found at threonine 355. At serine 365 the chain carries Phosphoserine. ATP is bound at residue aspartate 368.

This sequence belongs to the ATP:guanido phosphotransferase family. Exists as an octamer composed of four MTCK homodimers.

The protein localises to the mitochondrion inner membrane. The enzyme catalyses creatine + ATP = N-phosphocreatine + ADP + H(+). In terms of biological role, reversibly catalyzes the transfer of phosphate between ATP and various phosphogens (e.g. creatine phosphate). Creatine kinase isoenzymes play a central role in energy transduction in tissues with large, fluctuating energy demands, such as skeletal muscle, heart, brain and spermatozoa. The sequence is that of Creatine kinase U-type, mitochondrial (CKMT1) from Sus scrofa (Pig).